The sequence spans 436 residues: MNNIFPIMSLLFKQLYSRQGKKDAIRIAAGLVILAVFEIGLIRQAGIDESVLGKTYIILALLLMNTYMVFLSVTSQWKESYMKLSCLLPISSRSFWLAQSVVLFVDTCLRRTLFFFILPLFLFGNGTLSGAQTLFWLGRFSFFTVYSILFGVMLSNHFVKKKNSMFLLHAAVFAFVCLSAAFMPAVTIPLCAVHMLWAVIIDFPVFLQAPPHQSKMHFFMRRSEFSFYKREWNRFISSKAMLLNYVVMAAFSGFFSFQMMNTGIFNQQVIYIVISALLLICSPIALLYSIEKNDRMLLITLPIKRRTMFWAKYRFYSGLLAGGFLLVAIIVGFISGRPISALTFVQCMELLLAGAFIRLTADEKRPSFGWQTEQQLWSGFSKYRSYLFCLPLFLATLAGTAVSLAVIPIAALIIVYYLQKQDGGFFDTSKRERIGS.

10 helical membrane passes run 27–47 (IAAGLVILAVFEIGLIRQAGI), 51–71 (VLGKTYIILALLLMNTYMVFL), 112–132 (TLFFFILPLFLFGNGTLSGAQ), 134–154 (LFWLGRFSFFTVYSILFGVML), 166–186 (FLLHAAVFAFVCLSAAFMPAV), 187–207 (TIPLCAVHMLWAVIIDFPVFL), 240–260 (AMLLNYVVMAAFSGFFSFQMM), 270–290 (IYIVISALLLICSPIALLYSI), 315–335 (FYSGLLAGGFLLVAIIVGFIS), and 395–415 (ATLAGTAVSLAVIPIAALIIV).

The protein resides in the cell membrane. Involved in the production of the bacteriocin subtilosin. Required for immunity to subtilosin. The sequence is that of Antilisterial bacteriocin subtilosin biosynthesis protein AlbD (albD) from Bacillus subtilis.